The sequence spans 150 residues: Ribosome maturation factor RimP (150 aa).

Belongs to the RimP family.

The protein localises to the cytoplasm. Functionally, required for maturation of 30S ribosomal subunits. The sequence is that of Ribosome maturation factor RimP from Thermotoga maritima (strain ATCC 43589 / DSM 3109 / JCM 10099 / NBRC 100826 / MSB8).